The chain runs to 973 residues: ATP-dependent DNA helicase homolog RECG1, chloroplastic/mitochondrial (973 aa).

The sufficient for chloroplastic and mitochondrial trgeting stretch occupies residues 1–208 (MAAVTLSPCS…ATSEVEATSD (208 aa)). The tract at residues 174–200 (LLQNDDSSDPREDILDDGSSFTSKTAT) is disordered. Residues 536-725 (DLKRPVPMNR…LYGDISLTQI (190 aa)) form the Helicase ATP-binding domain. An ATP-binding site is contributed by 549 to 556 (GDVGCGKT). The short motif at 655-658 (DEQQ) is the DEQQ box element. The Helicase C-terminal domain occupies 746–904 (GIKEVYSMML…GFYLANIDLL (159 aa)).

The protein belongs to the helicase family. RecG subfamily. In terms of tissue distribution, expressed in most tissues, not seen in pollen, ovules or developing seeds.

The protein resides in the plastid. Its subcellular location is the chloroplast. It localises to the mitochondrion. It catalyses the reaction Couples ATP hydrolysis with the unwinding of duplex DNA by translocating in the 3'-5' direction.. The catalysed reaction is ATP + H2O = ADP + phosphate + H(+). Its function is as follows. Plays a critical role in recombination and DNA repair. Helps process Holliday junction (HJ) intermediates to mature products by catalyzing branch migration. Has replication fork regression activity, unwinds stalled or blocked replication forks to make a HJ that can be resolved. Has a DNA unwinding activity characteristic of a DNA helicase with 3'-5' polarity. Functionally, plays a role in recombination surveillance and repair of double-stranded (ds)DNA breaks in the mitochondrion. May be able to dissociate D- and R-loops. Able to complement UV sensitivity of a recG deletion in E.coli. This is ATP-dependent DNA helicase homolog RECG1, chloroplastic/mitochondrial from Arabidopsis thaliana (Mouse-ear cress).